Consider the following 255-residue polypeptide: Probable pyridoxal 5'-phosphate synthase subunit PDX2 (255 aa).

46-48 (GES) lines the L-glutamine pocket. Cys78 serves as the catalytic Nucleophile. Residues Arg108 and 142–143 (IR) each bind L-glutamine. Active-site charge relay system residues include His202 and Glu204. Residues 225-255 (GASSSSSKTIVSVGETSAGPEPAKPDLPIFQ) are disordered.

This sequence belongs to the glutaminase PdxT/SNO family. In terms of assembly, interacts with PDX1.1 or PDX1.3, but not with PDX1.2. Binds to RPA2A. In terms of tissue distribution, strongly expressed in roots, stems, leaves and flowers.

The protein resides in the cytoplasm. The catalysed reaction is aldehydo-D-ribose 5-phosphate + D-glyceraldehyde 3-phosphate + L-glutamine = pyridoxal 5'-phosphate + L-glutamate + phosphate + 3 H2O + H(+). It carries out the reaction L-glutamine + H2O = L-glutamate + NH4(+). It participates in cofactor biosynthesis; pyridoxal 5'-phosphate biosynthesis. Catalyzes the hydrolysis of glutamine to glutamate and ammonia as part of the biosynthesis of pyridoxal 5'-phosphate. The resulting ammonia molecule is channeled to the active site of PDX1. Involved in the indirect resistance to singlet oxygen-generating photosensitizers. The polypeptide is Probable pyridoxal 5'-phosphate synthase subunit PDX2 (PDX2) (Arabidopsis thaliana (Mouse-ear cress)).